The primary structure comprises 179 residues: Large ribosomal subunit protein uL6 (179 aa).

The protein belongs to the universal ribosomal protein uL6 family. In terms of assembly, part of the 50S ribosomal subunit.

In terms of biological role, this protein binds to the 23S rRNA, and is important in its secondary structure. It is located near the subunit interface in the base of the L7/L12 stalk, and near the tRNA binding site of the peptidyltransferase center. The polypeptide is Large ribosomal subunit protein uL6 (Prochlorococcus marinus (strain SARG / CCMP1375 / SS120)).